The sequence spans 632 residues: 2-oxoacid:ferredoxin oxidoreductase subunit alpha (632 aa).

The YPITP motif motif lies at 254–258 (YPITP). The substrate site is built by Thr-257 and Arg-345.

Heterodimer composed of an alpha and a beta subunit.

The enzyme catalyses a 2-oxocarboxylate + 2 oxidized [2Fe-2S]-[ferredoxin] + CoA = an acyl-CoA + 2 reduced [2Fe-2S]-[ferredoxin] + CO2 + H(+). In terms of biological role, catalyzes the coenzyme A-dependent oxidative decarboxylation of different 2-oxoacids such as 2-oxoglutarate, pyruvate and 2-oxobutyrate to form their CoA derivatives. The polypeptide is 2-oxoacid:ferredoxin oxidoreductase subunit alpha (Saccharolobus solfataricus (Sulfolobus solfataricus)).